A 37-amino-acid chain; its full sequence is Large ribosomal subunit protein bL36c (37 aa).

Belongs to the bacterial ribosomal protein bL36 family.

The protein resides in the plastid. The protein localises to the chloroplast. The chain is Large ribosomal subunit protein bL36c from Mesembryanthemum crystallinum (Common ice plant).